Consider the following 252-residue polypeptide: Thiamine thiazole synthase (252 aa).

NAD(+) is bound by residues Ser-35, 54–55 (EK), Gly-62, Val-126, and 152–154 (HVD). Residues Asp-154 and His-169 each coordinate Fe cation. Met-217 provides a ligand contact to NAD(+). Residue Arg-227 coordinates glycine.

The protein belongs to the THI4 family. As to quaternary structure, homooctamer; tetramer of dimers. Fe(2+) serves as cofactor.

The enzyme catalyses hydrogen sulfide + glycine + NAD(+) = ADP-5-ethyl-4-methylthiazole-2-carboxylate + nicotinamide + 3 H2O + H(+). Its pathway is cofactor biosynthesis; thiamine diphosphate biosynthesis. Functionally, involved in the biosynthesis of the thiazole moiety of thiamine. Catalyzes the conversion of NAD and glycine to adenosine diphosphate 5-(2-hydroxyethyl)-4-methylthiazole-2-carboxylate (ADT), an adenylated thiazole intermediate, using free sulfide as a source of sulfur. This is Thiamine thiazole synthase from Pyrococcus abyssi (strain GE5 / Orsay).